A 342-amino-acid chain; its full sequence is tRNA N6-adenosine threonylcarbamoyltransferase (342 aa).

Histidine 120 and histidine 124 together coordinate Fe cation. Residues valine 142–glycine 146, aspartate 175, glycine 188, aspartate 192, and asparagine 281 contribute to the substrate site. Aspartate 310 contributes to the Fe cation binding site.

The protein belongs to the KAE1 / TsaD family. The cofactor is Fe(2+).

The protein localises to the cytoplasm. It catalyses the reaction L-threonylcarbamoyladenylate + adenosine(37) in tRNA = N(6)-L-threonylcarbamoyladenosine(37) in tRNA + AMP + H(+). Required for the formation of a threonylcarbamoyl group on adenosine at position 37 (t(6)A37) in tRNAs that read codons beginning with adenine. Is involved in the transfer of the threonylcarbamoyl moiety of threonylcarbamoyl-AMP (TC-AMP) to the N6 group of A37, together with TsaE and TsaB. TsaD likely plays a direct catalytic role in this reaction. This chain is tRNA N6-adenosine threonylcarbamoyltransferase, found in Geobacillus kaustophilus (strain HTA426).